We begin with the raw amino-acid sequence, 333 residues long: Protoheme IX farnesyltransferase (333 aa).

8 consecutive transmembrane segments (helical) span residues 36–56, 61–81, 107–127, 130–150, 158–178, 186–206, 243–263, and 284–304; these read LIPL…GWPL, LVCT…LNCL, AAFA…VSGV, LAAG…TALL, IVIG…AATG, WLFA…ALLL, FLGV…LLPF, and AKGL…LLVF.

The protein belongs to the UbiA prenyltransferase family. Protoheme IX farnesyltransferase subfamily.

The protein resides in the cell inner membrane. It catalyses the reaction heme b + (2E,6E)-farnesyl diphosphate + H2O = Fe(II)-heme o + diphosphate. It functions in the pathway porphyrin-containing compound metabolism; heme O biosynthesis; heme O from protoheme: step 1/1. In terms of biological role, converts heme B (protoheme IX) to heme O by substitution of the vinyl group on carbon 2 of heme B porphyrin ring with a hydroxyethyl farnesyl side group. This is Protoheme IX farnesyltransferase from Synechococcus sp. (strain WH7803).